The sequence spans 183 residues: Large ribosomal subunit protein uL6 (183 aa).

It belongs to the universal ribosomal protein uL6 family. As to quaternary structure, part of the 50S ribosomal subunit.

Its function is as follows. This protein binds to the 23S rRNA, and is important in its secondary structure. It is located near the subunit interface in the base of the L7/L12 stalk, and near the tRNA binding site of the peptidyltransferase center. The polypeptide is Large ribosomal subunit protein uL6 (Chlamydia trachomatis serovar D (strain ATCC VR-885 / DSM 19411 / UW-3/Cx)).